We begin with the raw amino-acid sequence, 500 residues long: NAD(P)H-quinone oxidoreductase chain 4, chloroplastic (500 aa).

The next 14 membrane-spanning stretches (helical) occupy residues 4–24 (FPWL…IFFL), 35–55 (YTIA…CYHF), 87–107 (LGSI…AWPV), 111–131 (SQLF…LFSS), 134–154 (LLLF…LLSM), 167–187 (FILY…GMGL), 211–231 (ILLY…IPLH), 242–262 (HYST…YGLI), 272–292 (AHYL…IYAA), 313–333 (MGFI…GAIL), 334–354 (QILS…TACD), 386–406 (LALP…GLIT), 417–437 (LITF…LSML), and 462–482 (LFLL…PDFV).

The protein belongs to the complex I subunit 4 family.

The protein localises to the plastid. The protein resides in the chloroplast thylakoid membrane. It carries out the reaction a plastoquinone + NADH + (n+1) H(+)(in) = a plastoquinol + NAD(+) + n H(+)(out). It catalyses the reaction a plastoquinone + NADPH + (n+1) H(+)(in) = a plastoquinol + NADP(+) + n H(+)(out). The sequence is that of NAD(P)H-quinone oxidoreductase chain 4, chloroplastic from Saccharum officinarum (Sugarcane).